Consider the following 137-residue polypeptide: MNIMITKIFFLVQLFYIVVSKSSAEENCETVASEVHVTKEEYDEMGRLLRSCSGEVSVNKCEGMCNSQVHPSISSPTGFQKECFCCREKFLRERLVTLTHCYDPDGIRFEDEENALMEVRLREPDECECYKCGDFSR.

Positions 1 to 24 (MNIMITKIFFLVQLFYIVVSKSSA) are cleaved as a signal peptide. 5 disulfides stabilise this stretch: cysteine 28–cysteine 86, cysteine 52–cysteine 101, cysteine 61–cysteine 127, cysteine 65–cysteine 129, and cysteine 83–cysteine 132. Residues 28 to 123 (CETVASEVHV…NALMEVRLRE (96 aa)) enclose the CTCK domain.

As to quaternary structure, heterodimer of burs and pburs.

The protein resides in the secreted. Final heterodimeric neurohormone released at the end of the molting cycle, involved in the sclerotization (tanning) of the insect cuticle, melanization and wing spreading. This Bombyx mori (Silk moth) protein is Partner of bursicon.